Consider the following 238-residue polypeptide: Anti-sigma-K factor RskA (238 aa).

Over 1–97 (MTSPQNDLLS…RSSSRRRAAA (97 aa)) the chain is Cytoplasmic. A helical membrane pass occupies residues 98–118 (VLSAAAAVVIGLGTLAVGYAL). Topologically, residues 119 to 238 (RPAPTPSTAE…TPVFAELPLT (120 aa)) are extracellular.

Belongs to the anti-sigma-K factor family.

Its subcellular location is the cell membrane. An anti-sigma factor for extracytoplasmic function (ECF) sigma factor SigK. ECF sigma factors are held in an inactive form by an anti-sigma factor until released by regulated intramembrane proteolysis (RIP). RIP occurs when an extracytoplasmic signal triggers a concerted proteolytic cascade to transmit information and elicit cellular responses. The membrane-spanning regulatory substrate protein is first cut extracytoplasmically (site-1 protease, S1P), then within the membrane itself (site-2 protease, S2P, Rip1), while cytoplasmic proteases finish degrading the regulatory protein, liberating the sigma factor. The sequence is that of Anti-sigma-K factor RskA (rskA) from Mycolicibacterium vanbaalenii (strain DSM 7251 / JCM 13017 / BCRC 16820 / KCTC 9966 / NRRL B-24157 / PYR-1) (Mycobacterium vanbaalenii).